A 569-amino-acid polypeptide reads, in one-letter code: MNDKDLKKLTAKSLGREKAELVLKNAQVINVFSEEILVRDVAVGDGMIVGVGQYQGREEVDLSGKYLCPGFIDAHLHLESTLVAPPELIHSALQWGTTTFIIDPHEVVNVAGEEGLDYMLEQTEGLAANVFVMLPSCVPAVPFEENGGVFTAEKMEPYLANPRVLGLGEVMDYVSVIGAEEEMVKKLRLFRERIKDGHAPYLQDKQLAAYALAGIKTDHECIDYAYALEEIRNGMQVLIREGSGARNLAAIVRGIRENNLDTGNFSFCTDDKHINDIQREGHISYNIKKSIALGLPPLKAIKMATLNTARCYNLTELGAVAPGYQADFVILDSLEEVAVHAVYHKGKKVEREKKIDIKPCSEQLRRTVHLPALSAEDLKLAVPDSPSSLIQMSEGQITTKHVRDVLPARDGCFVPNAQYNKVVVVERHKGTGHFAVAPVLGFNLGQGAIATSVSHDSHNVVAIGDNDESILLALQELQRVQGGYTMIREQRVLATLPLPIMGLISDAGHQAVESMLNTMVGYAHEMGVPASIHPFIALSFIALPVIPEIRITTRGLYDAVEQKFIRYIP.

This sequence belongs to the metallo-dependent hydrolases superfamily. Adenine deaminase family. Mn(2+) is required as a cofactor.

It carries out the reaction adenine + H2O + H(+) = hypoxanthine + NH4(+). This Desulfitobacterium hafniense (strain Y51) protein is Adenine deaminase.